Consider the following 239-residue polypeptide: Protein LIFEGUARD 2 (239 aa).

Helical transmembrane passes span 41 to 61 (LLVTIAVAATVVKVHSISVFF), 66 to 86 (AGFALYILLILTPLIVMCPLY), 96 to 116 (YLLLGIFTVALAFAVGLTCAF), 121 to 141 (VILESVILTAVVVISLTLYTF), 156 to 176 (FLFGAVIVLMVFSFIQILFPL), 179 to 199 (ISVMIYGCLASIIFCGYIVYD), and 213 to 233 (IWAAVSLYLDVINLFLSLLTL).

Belongs to the BI1 family. Expressed in seedlings, roots, leaves, inflorescences and flowers.

Its subcellular location is the membrane. Functionally, regulates the brassinosteroid (BR) signaling pathway that mediates cell elongation and organ morphogenesis. Its function is as follows. (Microbial infection) Facilitates the development of the powdery mildew fungus E.cruciferarum. (Microbial infection) May prevent cell death upon A.alternata f.sp. lycopersici (AAL) toxin treatment. This chain is Protein LIFEGUARD 2, found in Arabidopsis thaliana (Mouse-ear cress).